The sequence spans 318 residues: Cytochrome c biogenesis protein CcsA (318 aa).

The next 8 helical transmembrane spans lie at 17-37 (VLAL…ISFW), 45-65 (SAVV…QLVL), 75-95 (ISNL…AQLL), 104-124 (IVSA…SFAL), 149-169 (VIMC…AVLF), 224-244 (TITV…VWAN), 258-275 (TWAL…HTRF), and 287-307 (VAVA…LLGI).

This sequence belongs to the CcmF/CycK/Ccl1/NrfE/CcsA family. As to quaternary structure, may interact with ccs1.

The protein resides in the cellular thylakoid membrane. In terms of biological role, required during biogenesis of c-type cytochromes (cytochrome c6 and cytochrome f) at the step of heme attachment. The sequence is that of Cytochrome c biogenesis protein CcsA from Prochlorococcus marinus (strain MIT 9303).